Reading from the N-terminus, the 1059-residue chain is Cellulose synthase catalytic subunit A [UDP-forming] (1059 aa).

Disordered stretches follow at residues Met-1–Thr-159 and Met-174–Ala-220. Low complexity predominate over residues Asn-15–Gly-36. 2 stretches are compositionally biased toward polar residues: residues Gly-40–Leu-57 and Asn-142–Gly-154. The span at Gln-181–Gln-194 shows a compositional bias: low complexity. The segment covering Gln-204–Val-219 has biased composition (basic residues). 3 consecutive transmembrane segments (helical) span residues Phe-246–Phe-266, Ile-280–Ala-300, and Phe-306–Ala-323. The catalytic subdomain A stretch occupies residues Lys-328–Gln-628. Asp-370 is a catalytic residue. Residues Asp-624 and Asp-626 each coordinate substrate. The catalytic subdomain B stretch occupies residues Gln-701–Ala-761. The active site involves Asp-717. 2 helical membrane passes run Ile-790 to Ile-810 and Val-813 to Val-833. Residues Asp-933–Lys-953 are disordered. Over residues Ser-939–Lys-953 the composition is skewed to basic and acidic residues. 3 helical membrane-spanning segments follow: residues Leu-963–Leu-983, Trp-993–Ile-1013, and Ile-1035–Ile-1055.

The protein belongs to the glycosyltransferase 2 family. The cofactor is Mg(2+).

It localises to the membrane. It catalyses the reaction [(1-&gt;4)-beta-D-glucosyl](n) + UDP-alpha-D-glucose = [(1-&gt;4)-beta-D-glucosyl](n+1) + UDP + H(+). The protein operates within glycan metabolism; amoeba cellulose biosynthesis. Catalytic subunit of cellulose synthase. It incorporates glucose from uridine 5'-diphosphate glucose (UDP-alpha-D-glucose) to cellulose (a (1-&gt;4)-beta-D-glucan), which is produced as an extracellular component for mechanical and chemical protection at the onset of the stalk formation, when the cells exhibit multicellular behavior during culmination. The polypeptide is Cellulose synthase catalytic subunit A [UDP-forming] (dcsA) (Dictyostelium discoideum (Social amoeba)).